Reading from the N-terminus, the 293-residue chain is Nitrogenase iron protein (293 aa).

10–17 (GKGGIGKS) lines the ATP pocket. Cys-98 is a [4Fe-4S] cluster binding site. Arg-101 is modified (ADP-ribosylarginine; by dinitrogenase reductase ADP-ribosyltransferase). Cys-133 is a [4Fe-4S] cluster binding site.

This sequence belongs to the NifH/BchL/ChlL family. As to quaternary structure, homodimer. It depends on [4Fe-4S] cluster as a cofactor. The reversible ADP-ribosylation of Arg-101 inactivates the nitrogenase reductase and regulates nitrogenase activity.

It carries out the reaction N2 + 8 reduced [2Fe-2S]-[ferredoxin] + 16 ATP + 16 H2O = H2 + 8 oxidized [2Fe-2S]-[ferredoxin] + 2 NH4(+) + 16 ADP + 16 phosphate + 6 H(+). Functionally, the key enzymatic reactions in nitrogen fixation are catalyzed by the nitrogenase complex, which has 2 components: the iron protein and the molybdenum-iron protein. In Pectobacterium atrosepticum (strain SCRI 1043 / ATCC BAA-672) (Erwinia carotovora subsp. atroseptica), this protein is Nitrogenase iron protein.